Reading from the N-terminus, the 111-residue chain is WAP four-disulfide core domain protein 12 (111 aa).

The signal sequence occupies residues 1 to 23 (MGSSSFLVLMVSLTLVTLVAAEG). A WAP domain is found at 27–74 (GIEKAGVCPADNVRCFKSDPPQCHTDQDCLGERKCCYLHCGFKCVIPV). Intrachain disulfides connect Cys34–Cys62, Cys41–Cys66, Cys49–Cys61, and Cys55–Cys70. The tract at residues 80–111 (GGNKDEDVSGPCPEPGWEAKSPGSSSTGCPQK) is disordered. A compositionally biased stretch (polar residues) spans 101–111 (PGSSSTGCPQK).

The protein localises to the secreted. In terms of biological role, antibacterial protein. Putative acid-stable proteinase inhibitor. The sequence is that of WAP four-disulfide core domain protein 12 (WFDC12) from Chlorocebus aethiops (Green monkey).